We begin with the raw amino-acid sequence, 456 residues long: UDP-N-acetylmuramate--L-alanine ligase (456 aa).

112–118 provides a ligand contact to ATP; it reads GTHGKTT.

It belongs to the MurCDEF family.

The protein localises to the cytoplasm. The catalysed reaction is UDP-N-acetyl-alpha-D-muramate + L-alanine + ATP = UDP-N-acetyl-alpha-D-muramoyl-L-alanine + ADP + phosphate + H(+). It functions in the pathway cell wall biogenesis; peptidoglycan biosynthesis. Cell wall formation. The chain is UDP-N-acetylmuramate--L-alanine ligase from Trichlorobacter lovleyi (strain ATCC BAA-1151 / DSM 17278 / SZ) (Geobacter lovleyi).